Consider the following 24-residue polypeptide: Heptapoietin A light chain (24 aa).

As to quaternary structure, heterodimer of a heavy and a light chain linked by disulfide bond(s).

HPTA is an acidic heparin-binding growth factor for hepatocytes. This Oryctolagus cuniculus (Rabbit) protein is Heptapoietin A light chain.